The following is a 379-amino-acid chain: Alcohol dehydrogenase 2 (379 aa).

Zn(2+) contacts are provided by Cys47, Thr49, His69, Cys99, Cys102, Cys105, Cys113, and Cys177. 2 residues coordinate an alcohol: Thr49 and His69. Thr49 serves as a coordination point for NAD(+). Residues Gly202–Gly207, Asp226, Lys231, Thr272, Val295, Val295–Val297, Phe322, and Arg372 each bind NAD(+).

Belongs to the zinc-containing alcohol dehydrogenase family. As to quaternary structure, homodimer. Zn(2+) serves as cofactor.

It is found in the cytoplasm. The catalysed reaction is a primary alcohol + NAD(+) = an aldehyde + NADH + H(+). The enzyme catalyses a secondary alcohol + NAD(+) = a ketone + NADH + H(+). This chain is Alcohol dehydrogenase 2 (ADH2), found in Oryza sativa subsp. indica (Rice).